Reading from the N-terminus, the 245-residue chain is Large ribosomal subunit protein eL29 (245 aa).

Residues 1–26 (MAKSKNHTTHNQSRKWHRNGIKKPRS) show a composition bias toward basic residues. Disordered stretches follow at residues 1 to 33 (MAKS…ESLK) and 114 to 245 (RGLR…AKAP). Position 5 is an N6-methyllysine (K5). S31 carries the phosphoserine modification. An N6-acetyllysine modification is found at K33. Residues 134 to 150 (KGKVKAQIKAQAQAQIK) show a composition bias toward low complexity. Residues 157–171 (AQAETKPKAQAETKP) are compositionally biased toward basic and acidic residues. Low complexity-rich tracts occupy residues 172-226 (KAQA…ATPA) and 234-245 (PPKGAQPPAKAP).

This sequence belongs to the eukaryotic ribosomal protein eL29 family. As to quaternary structure, component of the large ribosomal subunit.

Its subcellular location is the cytoplasm. Functionally, component of the large ribosomal subunit. The ribosome is a large ribonucleoprotein complex responsible for the synthesis of proteins in the cell. The chain is Large ribosomal subunit protein eL29 (RPL29) from Oryctolagus cuniculus (Rabbit).